Consider the following 817-residue polypeptide: Leucine--tRNA ligase (817 aa).

Positions 40–50 (PYPSGKLHMGH) match the 'HIGH' region motif. The 'KMSKS' region motif lies at 578–582 (KMSKS). K581 is an ATP binding site.

Belongs to the class-I aminoacyl-tRNA synthetase family.

It is found in the cytoplasm. The catalysed reaction is tRNA(Leu) + L-leucine + ATP = L-leucyl-tRNA(Leu) + AMP + diphosphate. The chain is Leucine--tRNA ligase from Caldicellulosiruptor saccharolyticus (strain ATCC 43494 / DSM 8903 / Tp8T 6331).